We begin with the raw amino-acid sequence, 379 residues long: Pectin lyase A (379 aa).

The N-terminal stretch at 1-20 (MKTTFLVSLATAALSSTAAA) is a signal peptide. Disulfide bonds link cysteine 83–cysteine 102 and cysteine 92–cysteine 226. Residue arginine 256 is part of the active site. A disulfide bridge connects residues cysteine 323 and cysteine 331.

It belongs to the polysaccharide lyase 1 family.

It is found in the secreted. It catalyses the reaction Eliminative cleavage of (1-&gt;4)-alpha-D-galacturonan methyl ester to give oligosaccharides with 4-deoxy-6-O-methyl-alpha-D-galact-4-enuronosyl groups at their non-reducing ends.. Its function is as follows. Pectinolytic enzymes consist of four classes of enzymes: pectin lyase, polygalacturonase, pectin methylesterase and rhamnogalacturonase. Among pectinolytic enzymes, pectin lyase is the most important in depolymerization of pectin, since it cleaves internal glycosidic bonds of highly methylated pectins. In Emericella nidulans (strain FGSC A4 / ATCC 38163 / CBS 112.46 / NRRL 194 / M139) (Aspergillus nidulans), this protein is Pectin lyase A (pelA).